The primary structure comprises 290 residues: Arylamine N-acetyltransferase 1 (290 aa).

Position 1 is an N-acetylmethionine (Met1). The active-site Acyl-thioester intermediate is the Cys68. Ser103 serves as a coordination point for CoA. Residue 106 to 107 (VH) coordinates substrate. Catalysis depends on residues His107 and Asp122. Tyr208 contributes to the CoA binding site.

The protein belongs to the arylamine N-acetyltransferase family.

It localises to the cytoplasm. The catalysed reaction is an arylamine + acetyl-CoA = an N-acetylarylamine + CoA. Functionally, participates in the detoxification of a plethora of hydrazine and arylamine drugs. Isoniazid, 2-aminofluorene and anisidine are preferred substrates for NAT-1. No activity with p-aminobenzoic acid (PABA) nor SMZ. The polypeptide is Arylamine N-acetyltransferase 1 (Nat1) (Mus musculus (Mouse)).